The sequence spans 512 residues: Lysine--tRNA ligase (512 aa).

Mg(2+)-binding residues include E408 and E415.

The protein belongs to the class-II aminoacyl-tRNA synthetase family. Homodimer. It depends on Mg(2+) as a cofactor.

The protein localises to the cytoplasm. It catalyses the reaction tRNA(Lys) + L-lysine + ATP = L-lysyl-tRNA(Lys) + AMP + diphosphate. The sequence is that of Lysine--tRNA ligase from Prochlorococcus marinus (strain MIT 9301).